A 141-amino-acid chain; its full sequence is Eukaryotic translation initiation factor 1A (141 aa).

Over residues 1-15 (MPKNKGKGGKNRRRG) the composition is skewed to basic residues. The tract at residues 1–28 (MPKNKGKGGKNRRRGKNENEQKRELQFK) is disordered. Basic and acidic residues predominate over residues 16–28 (KNENEQKRELQFK). The 75-residue stretch at 21 to 95 (QKRELQFKEE…DKADVILRYN (75 aa)) folds into the S1-like domain.

The protein belongs to the eIF-1A family.

Functionally, seems to be required for maximal rate of protein biosynthesis. Enhances ribosome dissociation into subunits and stabilizes the binding of the initiator Met-tRNA(I) to 40 S ribosomal subunits. The polypeptide is Eukaryotic translation initiation factor 1A (eif1a) (Dictyostelium discoideum (Social amoeba)).